We begin with the raw amino-acid sequence, 475 residues long: Solute carrier family 46 member 2 (475 aa).

The Cytoplasmic portion of the chain corresponds to 1–23; that stretch reads MSPEVTCPRRGHLPRFHPRTWVE. Residues 24–44 form a helical membrane-spanning segment; the sequence is PVVASSQVAASLYDAGLLLVV. Residues 45-78 are Extracellular-facing; it reads KASYGTGGSSNHSASPSPRGALEDQQQRAISNFY. A glycan (N-linked (GlcNAc...) asparagine) is linked at N55. A helical transmembrane segment spans residues 79–99; that stretch reads IIYNLVVGLSPLLSAYGLGWL. The Cytoplasmic portion of the chain corresponds to 100–108; the sequence is SDRYHRKIS. Residues 109 to 129 form a helical membrane-spanning segment; sequence ICMSLLGFLLSRLGLLLKVLL. The Extracellular segment spans residues 130-138; it reads DWPVEVLYG. A helical membrane pass occupies residues 139-159; the sequence is AAALNGLFGGFSAFWSGVMAL. Residues 160-172 lie on the Cytoplasmic side of the membrane; that stretch reads GSLGSSEGRRSVR. A helical membrane pass occupies residues 173 to 193; that stretch reads LILIDLMLGLAGFCGSMASGH. Residues 194–205 are Extracellular-facing; it reads LFKQMAGHSGQG. The chain crosses the membrane as a helical span at residues 206-226; it reads LILTACSVSCASFALLYSLLV. The Cytoplasmic segment spans residues 227 to 282; sequence LKVPESVAKPSQELPAVDTVSGTVGTYRTLDPDQLDQQYAVGHPPSPGKAKPHKTT. A helical membrane pass occupies residues 283–303; sequence IALLFVGAIIYDLAVVGTVDV. Residues 304-320 lie on the Extracellular side of the membrane; sequence IPLFVLREPLGWNQVQV. The chain crosses the membrane as a helical span at residues 321-341; that stretch reads GYGMAAGYTIFITSFLGVLVF. The Cytoplasmic segment spans residues 342-347; that stretch reads SRCFRD. The chain crosses the membrane as a helical span at residues 348–368; sequence TTMIMIGMVSFGSGALLLAFV. Residues 369-370 are Extracellular-facing; it reads KE. Residues 371-391 form a helical membrane-spanning segment; that stretch reads TYMFYIARAVMLFALIPVTTI. Over 392 to 406 the chain is Cytoplasmic; sequence RSAMSKLIKGSSYGK. A helical membrane pass occupies residues 407–427; the sequence is VFVILQLSLALTGVVTSTLYN. Residues 428–435 lie on the Extracellular side of the membrane; it reads KIYQLTMD. Residues 436-456 traverse the membrane as a helical segment; it reads MFVGSCFALSSFLSFLAIIPI. Topologically, residues 457–475 are cytoplasmic; that stretch reads SIVAYKQVPLSPYGDIIEK.

Belongs to the major facilitator superfamily. SLC46A family. Glycosylated. In terms of tissue distribution, strongly expressed in the adult thymus. Expressed in spleen, lymph nodes, thymus, PBL, bone marrow and fetal liver. Expressed in monocytes and pre-dendridic cells.

It localises to the endosome membrane. The protein localises to the cell membrane. It catalyses the reaction N-acetyl-beta-D-glucosaminyl-(1-&gt;4)-1,6-anhydro-N-acetyl-beta-D-muramoyl-L-alanyl-gamma-D-glutamyl-meso-2,6-diaminopimeloyl-D-alanine(out) + n H(+)(out) = N-acetyl-beta-D-glucosaminyl-(1-&gt;4)-1,6-anhydro-N-acetyl-beta-D-muramoyl-L-alanyl-gamma-D-glutamyl-meso-2,6-diaminopimeloyl-D-alanine(in) + n H(+)(in). The enzyme catalyses L-alanyl-gamma-D-glutamyl-meso-2,6-diaminopimelate(out) + n H(+)(out) = L-alanyl-gamma-D-glutamyl-meso-2,6-diaminopimelate(in) + n H(+)(in). It carries out the reaction N-acetyl-D-muramoyl-L-alanyl-D-isoglutamine(out) + n H(+)(out) = N-acetyl-D-muramoyl-L-alanyl-D-isoglutamine(in) + n H(+)(in). The catalysed reaction is 2',3'-cGAMP(out) + n H(+)(out) = 2',3'-cGAMP(in) + n H(+)(in). It catalyses the reaction 3',3'-cGAMP(out) + n H(+)(out) = 3',3'-cGAMP(in) + n H(+)(in). Its function is as follows. Proton-coupled transporter that delivers pathogen-associated or danger-associated molecular patterns to cytosolic pattern recognition receptors as part of the innate immune response to microbes or tissue injury. Has selectivity toward muropeptides that contain the amino acid diaminopimelic acid (DAP-type peptidoglycan muropeptides) including Tri-DAP and tracheal toxin (TCT), common in Gram-negative bacteria and Gram-positive bacilli. In the context of immune recognition of skin microbiota, shuttles bacterial muropeptides across the endolysosomal membranes into the cytosol for recognition by NOD1, triggering MYD88-dependent secretion of IL1A and neutrophil recruitment in a pyroptosis-type inflammatory process. To a lesser extent and redundantly, transports muramyl dipeptides derived from most bacterial proteoglycans, eliciting NOD2 receptor activation and downstream inflammatory responses. Postulated to function as a dominant importer of cyclic GMP-AMP dinucleotides (cGAMPs) in monocyte and macrophage cell lineages. Selectively imports cGAMPs derived from pathogenic bacteria such as 3'3'-cGAMP thus providing for differential immune recognition of pathogenic versus commensal bacteria. During tumorigenesis may transport extracellular tumor-derived 2'3'-cGAMP across the plasma membrane of M1-polarized macrophages to activate the anti-tumoral stimulator of interferon genes (STING) pathway. The transport mechanism, its electrogenicity and stoichiometry remain to be elucidated. This chain is Solute carrier family 46 member 2, found in Homo sapiens (Human).